The chain runs to 156 residues: ATP synthase subunit b (156 aa).

The chain crosses the membrane as a helical span at residues leucine 7–leucine 29.

Belongs to the ATPase B chain family. In terms of assembly, F-type ATPases have 2 components, F(1) - the catalytic core - and F(0) - the membrane proton channel. F(1) has five subunits: alpha(3), beta(3), gamma(1), delta(1), epsilon(1). F(0) has three main subunits: a(1), b(2) and c(10-14). The alpha and beta chains form an alternating ring which encloses part of the gamma chain. F(1) is attached to F(0) by a central stalk formed by the gamma and epsilon chains, while a peripheral stalk is formed by the delta and b chains.

The protein localises to the cell inner membrane. Functionally, f(1)F(0) ATP synthase produces ATP from ADP in the presence of a proton or sodium gradient. F-type ATPases consist of two structural domains, F(1) containing the extramembraneous catalytic core and F(0) containing the membrane proton channel, linked together by a central stalk and a peripheral stalk. During catalysis, ATP synthesis in the catalytic domain of F(1) is coupled via a rotary mechanism of the central stalk subunits to proton translocation. Its function is as follows. Component of the F(0) channel, it forms part of the peripheral stalk, linking F(1) to F(0). This chain is ATP synthase subunit b, found in Burkholderia ambifaria (strain MC40-6).